A 360-amino-acid chain; its full sequence is Phospho-N-acetylmuramoyl-pentapeptide-transferase (360 aa).

The next 10 helical transmembrane spans lie at 25–45 (RTIY…PWLI), 73–93 (TMGG…WADL), 94–114 (TNAY…IGFV), 134–154 (FCLQ…GLNG), 173–193 (PGYV…VNLT), 198–218 (GLAI…AYVA), 240–260 (VFCG…AYPA), 262–282 (IFMG…VAIL), 287–307 (LALV…ILQV), and 337–357 (KVIV…VSTL).

It belongs to the glycosyltransferase 4 family. MraY subfamily. Mg(2+) serves as cofactor.

It is found in the cell inner membrane. It catalyses the reaction UDP-N-acetyl-alpha-D-muramoyl-L-alanyl-gamma-D-glutamyl-meso-2,6-diaminopimeloyl-D-alanyl-D-alanine + di-trans,octa-cis-undecaprenyl phosphate = di-trans,octa-cis-undecaprenyl diphospho-N-acetyl-alpha-D-muramoyl-L-alanyl-D-glutamyl-meso-2,6-diaminopimeloyl-D-alanyl-D-alanine + UMP. It functions in the pathway cell wall biogenesis; peptidoglycan biosynthesis. Its function is as follows. Catalyzes the initial step of the lipid cycle reactions in the biosynthesis of the cell wall peptidoglycan: transfers peptidoglycan precursor phospho-MurNAc-pentapeptide from UDP-MurNAc-pentapeptide onto the lipid carrier undecaprenyl phosphate, yielding undecaprenyl-pyrophosphoryl-MurNAc-pentapeptide, known as lipid I. This Desulfatibacillum aliphaticivorans protein is Phospho-N-acetylmuramoyl-pentapeptide-transferase.